An 863-amino-acid chain; its full sequence is Linoleate 9S-lipoxygenase 1 (863 aa).

Residues 32–158 enclose the PLAT domain; the sequence is RDFTASLLDN…KYHYNRIFFA (127 aa). A Lipoxygenase domain is found at 161 to 863; sequence SYLPSQMPEA…ARGIPNSISI (703 aa). The disordered stretch occupies residues 204–244; sequence NDLGEPDRDNPRPVLGGSQKHPYPRRGRTGRIPTKKDPNSE. Fe cation is bound by residues His-518, His-523, His-709, Asn-713, and Ile-863.

Belongs to the lipoxygenase family. Monomer. Requires Fe cation as cofactor.

Its subcellular location is the cytoplasm. It carries out the reaction (9Z,12Z)-octadecadienoate + O2 = (9S)-hydroperoxy-(10E,12Z)-octadecadienoate. It functions in the pathway lipid metabolism; oxylipin biosynthesis. Plant lipoxygenase may be involved in a number of diverse aspects of plant physiology including growth and development, pest resistance, and senescence or responses to wounding. This lipoxygenase introduces molecular oxygen exclusively into the C-9 position of linoleic and linolenic. In Oryza sativa subsp. japonica (Rice), this protein is Linoleate 9S-lipoxygenase 1.